Reading from the N-terminus, the 352-residue chain is DNA polymerase IV (352 aa).

Positions 4–185 (IIHVDMDCFF…LPLSKIPGVG (182 aa)) constitute a UmuC domain. Aspartate 8 and aspartate 103 together coordinate Mg(2+). Residue glutamate 104 is part of the active site.

The protein belongs to the DNA polymerase type-Y family. Monomer. The cofactor is Mg(2+).

It is found in the cytoplasm. The catalysed reaction is DNA(n) + a 2'-deoxyribonucleoside 5'-triphosphate = DNA(n+1) + diphosphate. Its function is as follows. Poorly processive, error-prone DNA polymerase involved in untargeted mutagenesis. Copies undamaged DNA at stalled replication forks, which arise in vivo from mismatched or misaligned primer ends. These misaligned primers can be extended by PolIV. Exhibits no 3'-5' exonuclease (proofreading) activity. May be involved in translesional synthesis, in conjunction with the beta clamp from PolIII. This Yersinia pestis bv. Antiqua (strain Antiqua) protein is DNA polymerase IV.